A 59-amino-acid polypeptide reads, in one-letter code: Large ribosomal subunit protein bL32 (59 aa).

Residues 1–19 (MAQPKKKTSKSRRNMRRSH) are compositionally biased toward basic residues. Residues 1–20 (MAQPKKKTSKSRRNMRRSHD) are disordered.

The protein belongs to the bacterial ribosomal protein bL32 family.

The sequence is that of Large ribosomal subunit protein bL32 from Maridesulfovibrio salexigens (strain ATCC 14822 / DSM 2638 / NCIMB 8403 / VKM B-1763) (Desulfovibrio salexigens).